The sequence spans 272 residues: Insulin-like growth factor-binding protein 1 (272 aa).

The first 25 residues, 1-25, serve as a signal peptide directing secretion; the sequence is MPEVPAAGLWPFLLLLAVQVSTVAS. The region spanning 28–109 is the IGFBP N-terminal domain; the sequence is QPWHCAPCSA…TRGQGACVPE (82 aa). Cystine bridges form between cysteine 32–cysteine 59, cysteine 35–cysteine 61, cysteine 43–cysteine 62, cysteine 50–cysteine 65, and cysteine 73–cysteine 86. A phosphoserine mark is found at serine 139, serine 157, and serine 169. Position 170 is a phosphothreonine (threonine 170). Tyrosine 171 is modified (phosphotyrosine). Positions 186-264 constitute a Thyroglobulin type-1 domain; the sequence is KQPCRRELYK…SLEIRGDPNC (79 aa). 3 cysteine pairs are disulfide-bonded: cysteine 189/cysteine 219, cysteine 230/cysteine 241, and cysteine 243/cysteine 264. Residue serine 255 is modified to Phosphoserine. The Cell attachment site signature appears at 259–261; the sequence is RGD.

Binds equally well IGF1 and IGF2. Interacts with integrin ITGA5:ITGB1. Interacts with VHL; this interaction inhibits HIF1A degradation.

It is found in the secreted. Functionally, multifunctional protein that plays a critical role in regulating the availability of IGFs such as IGF1 and IGF2 to their receptors and thereby regulates IGF-mediated cellular processes including cell migration, proliferation, differentiation or apoptosis in a cell-type specific manner. Also plays a positive role in cell migration by interacting with integrin ITGA5:ITGB1 through its RGD motif. Mechanistically, binding to integrins leads to activation of focal adhesion kinase/PTK2 and stimulation of the mitogen-activated protein kinase (MAPK) pathway. Regulates cardiomyocyte apoptosis by suppressing HIF-1alpha/HIF1A degradation through ubiquitination. The protein is Insulin-like growth factor-binding protein 1 (IGFBP1) of Ictidomys tridecemlineatus (Thirteen-lined ground squirrel).